Here is a 430-residue protein sequence, read N- to C-terminus: MSQYQAVKGTRDIFPEEAAQWKHVEEVVHTLASLYGFSEVRTPVFEYTELFQRGIGATTDIVGKEMFTFLPDPGGRSLTLRPEMTAGVMRAALQRNLLSQAPVHKLYYISELFRKERPQAGRQRQFSQFGAELLGVSSPAAVAEVLTFMMQVFETLGLSGLRLRINTLGDLEDRARYREALRSYFQPYEGELDESSKERLEKNPLRILDSKNPALRDMITGAPRLFDFVKAEGVREFEAVLRFLADRGIDYDVDHLLVRGLDYYCHTAFEVQSTALGAQDAIGGGGRYDGLAKELGGGKEMPAVGFAVGMERLLIAMEKQGLFATLNPHGPLVYVVVQQSELADHGMQVAFKLRRSGISTEIDLAARSMKAQMREANRIRSGYALFVGQSELESGQYALKNLVTSEQTTLELQAIIEILREPSIREGLKA.

Belongs to the class-II aminoacyl-tRNA synthetase family. As to quaternary structure, homodimer.

Its subcellular location is the cytoplasm. The enzyme catalyses tRNA(His) + L-histidine + ATP = L-histidyl-tRNA(His) + AMP + diphosphate + H(+). In Chlorobium luteolum (strain DSM 273 / BCRC 81028 / 2530) (Pelodictyon luteolum), this protein is Histidine--tRNA ligase.